The primary structure comprises 238 residues: Large ribosomal subunit protein uL2 (238 aa).

Residues 200-238 are disordered; that stretch reads HGGGLHQSVSRPSTVSRNAPPGRKVGHIAARRTGRKEGK. The span at 206-216 shows a compositional bias: polar residues; sequence QSVSRPSTVSR. Over residues 223–238 the composition is skewed to basic residues; sequence KVGHIAARRTGRKEGK.

This sequence belongs to the universal ribosomal protein uL2 family. Part of the 50S ribosomal subunit. Forms a bridge to the 30S subunit in the 70S ribosome.

In terms of biological role, one of the primary rRNA binding proteins. Required for association of the 30S and 50S subunits to form the 70S ribosome, for tRNA binding and peptide bond formation. It has been suggested to have peptidyltransferase activity; this is somewhat controversial. Makes several contacts with the 16S rRNA in the 70S ribosome. The chain is Large ribosomal subunit protein uL2 from Saccharolobus islandicus (strain Y.N.15.51 / Yellowstone #2) (Sulfolobus islandicus).